Reading from the N-terminus, the 848-residue chain is Heat shock protein 70 homolog lhs1 (848 aa).

The signal sequence occupies residues 1-21; that stretch reads MKRSVLTIILFFSCQFWHAFA. Residues N134, N247, N359, N457, N462, N488, N555, N632, N678, N733, and N817 are each glycosylated (N-linked (GlcNAc...) asparagine). Residues 784 to 848 form a disordered region; it reads KLKAKKGASS…QQEIDDSDEL (65 aa). 2 stretches are compositionally biased toward polar residues: residues 807–822 and 829–840; these read TNDI…TSTQ and ASVTQRPSSLQQ. Positions 845-848 match the Prevents secretion from ER motif; that stretch reads SDEL.

The protein belongs to the heat shock protein 70 family.

It is found in the endoplasmic reticulum lumen. The enzyme catalyses ATP + H2O = ADP + phosphate + H(+). Functionally, chaperone required for protein translocation and folding in the endoplasmic reticulum. This chain is Heat shock protein 70 homolog lhs1, found in Schizosaccharomyces pombe (strain 972 / ATCC 24843) (Fission yeast).